The sequence spans 464 residues: Protein FAM90A5 (464 aa).

Disordered stretches follow at residues 16–42, 70–389, and 415–437; these read RAQT…DPRL, PATL…HDGA, and HSPE…SEAP. 2 stretches are compositionally biased toward basic and acidic residues: residues 74-89 and 97-114; these read GKKE…KPRV and NKDK…DPQR. Residues 180-197 are compositionally biased toward low complexity; the sequence is LASLSPLRKASLSSSSSL.

The protein belongs to the FAM90 family.

The polypeptide is Protein FAM90A5 (Homo sapiens (Human)).